Reading from the N-terminus, the 1897-residue chain is MELNGIRRRLATAKEAERHRLLLELIRAAAAEALDRPGPLPLDPGRAFGAQGVRGRAAGRLRERLSEATGLPLPATVVFDYPTPGALAGRLCALLLDEPAGPGGANGQMEAEEPIAIVGMGCRLPGDVRSPEGLWRLVHNGTDAISEFPEDRGWTVQQHPDPDHLGTTVTRHAGFLYDAPDFDAGFFAISPGEAVTIDPQHRLLLETTWKAVEDARIDPTSLRGSRTGVFVGLMYSEYGARIRRVPPGAEGYRVVGSMPSVASGRLAYTFGFEGPAVTVDTACSSSLVAMHLAAQSLRKGECTLAVAGGATVMATPWGYIEFSRQRGLAPDGRCRSFSADAAGSSWSEGVGVLLLERLSDARRHGHRVLAVVRGSAVNQDGASNGLTAPNGPAQQRVIRQALAHAGLTTAEVDAVDAHGAGTRLGDPIEAQALLATYGQGRPAGRPLWLGSLKSNIGHTQAAAGAAGVIKMVMAMRHGVLPRSLHITEPTPHVDWTSGAVELLTEARDWPADGRPRRAAVSSFGVGGTNAHIILEQAAPEPERPHAPEADGEPRPLPWPVSGHGAAGLRAQARRLADFLRAGPAAPDADLAYSLATTRATLTDRAVVVAADRAEAIARLTALAEGDQGPRVARATAVPRDRLAFVFPGQGSQWPGMAAELMSCYPVFRESIKECGRSLAPHTDWSLAKVLRGESGAPTLDRVDVVQPALFAVMVSLAALWRSFGVEPSAVAGHSQGEIAAARVAGALSLEDAARVVALRSRALRVLSGRGGMVSVAAPAGQVLRTLERWGGAVSVAAVNGPRSLVISGDPGALGEALAAFEAEGIRARRIPVDYASHSAQVEEIRDTLLTELSGIRPRPATVPFYSTVSGEPLDTTALDTGYWVRNLRDTVQFDRTVRRLLADGHTTFLEMSPHPVLTPGIQETAEEAGADEVLTVESLRRNEGGPARLLTAVAEAHVHGVAVDWSPAFAPHRSPARRPAVLRLSSGAATGLRTRPRPPPMFTTAGLDGIDHPLLGAAIPLADGGGGTLFTGTLSLATHPWLADHAVADVLVVPGTALVEAALRAGAECTGRAMLEELVLQAPLILPEQGTVRIQLSVGGPDGTGRRALILSSRPEDAGADEPWTRHAEGTLAPGGGHPRQDPGPWPPTGAREIDLDDCYRQLAKTGLHYGPAFQGLKRLWRLADDLCLEAELPDSAGESGRYGLHPALFDAALHAAALAGPSGAEPLTRLPFSWSGVALYTAGATRLRARLSFTGPQSLTLTAMDPLGHPVLSVGTLGMRPVTAEALHRAAGTAGTALLRLEWRRQAPEHPAGPDLTGWAWVGAGAPPAQPPDGRPYRDLAALRAELDAGAAVPPVIVLAEPATPEGTDPFTAARAALHRTLAAIQDWAAEERLAGTRLVVLTQGAVAATPGALPDPALAAVWGLVRSAQAEYPDRIGLVDTDDPGRSRAAVAAAVHAGEAQAAVRDGALLVPRLARVTATDGPGGPAWPADGTVLVTGGLGTLGRLVVRHLVTTHGARRLVILSRSGGDSAEVREFVGELLAQGANVQVVKGDAADPAVLERVLDGIPQEHPLAAVAHLAGALDDGVLAAQTPQRLDRVLRPKAEAAWQLHRLTARARVPLLAFSSLSGVLGPAGQAGYAAANAFVDALVQRRRGTGLPGVSMGWGMWATRSGLTGALSDTDARLIARTGVRPLTDEEGLALFDQARATGEPVVFPLGLDITALNSGAPDGIPPLLRGLTARTPARRAGAAEAPEPAGEDLAARLAATPEAERDALLLGVVRGHIAAVLGYDDPRAVAERRPFSDIGFDSLRALQLRNRLGAATGRRLPATLVFDHPNPAALSRYLRTLLLPDPAPAPTAPDGQPGPDQADQVIERLNSASLEEVLDFIDHQLGE.

Residues 112–536 (EEPIAIVGMG…GTNAHIILEQ (425 aa)) form the Ketosynthase family 3 (KS3) domain. Active-site for beta-ketoacyl synthase activity residues include Cys283, His418, and His458. A disordered region spans residues 538 to 563 (APEPERPHAPEADGEPRPLPWPVSGH). A compositionally biased stretch (basic and acidic residues) spans 540 to 553 (EPERPHAPEADGEP). Positions 644-962 (FVFPGQGSQW…VAEAHVHGVA (319 aa)) constitute a Malonyl-CoA:ACP transacylase (MAT) domain. The interval 1012–1139 (HPLLGAAIPL…GTLAPGGGHP (128 aa)) is N-terminal hotdog fold. The region spanning 1012-1289 (HPLLGAAIPL…MRPVTAEALH (278 aa)) is the PKS/mFAS DH domain. His1045 acts as the Proton acceptor; for dehydratase activity in catalysis. A disordered region spans residues 1113–1152 (SRPEDAGADEPWTRHAEGTLAPGGGHPRQDPGPWPPTGAR). Residues 1151-1289 (AREIDLDDCY…MRPVTAEALH (139 aa)) are C-terminal hotdog fold. Residue Asp1211 is the Proton donor; for dehydratase activity of the active site. Positions 1494–1671 (GTVLVTGGLG…GVSMGWGMWA (178 aa)) constitute a Ketoreductase (KR) domain. Residues 1777–1852 (ALLLGVVRGH…ALSRYLRTLL (76 aa)) enclose the Carrier domain. Ser1812 is modified (O-(pantetheine 4'-phosphoryl)serine). A disordered region spans residues 1854 to 1873 (PDPAPAPTAPDGQPGPDQAD). Low complexity predominate over residues 1862-1871 (APDGQPGPDQ).

As to quaternary structure, the spectinabilin polyketide synthase complex is composed of 4 proteins, NorA, NorA', NorB and NorC. The complex comprises 6 modules with a total of 28 catalytic domains catalyzing 7 chain elongations. NorA comprises one module, NorA' two modules, NorB one module and NorC two modules. It depends on pantetheine 4'-phosphate as a cofactor.

The catalysed reaction is 4-nitrobenzoyl-CoA + 6 (S)-methylmalonyl-CoA + malonyl-CoA + 6 NADPH + 12 H(+) = demethyldeoxyspectinabilin + 7 CO2 + 6 NADP(+) + 8 CoA + 5 H2O. It functions in the pathway antibiotic biosynthesis. The protein operates within polyketide biosynthesis. Its function is as follows. Component of a type I modular polyketide synthase (PKS) that generates the backbone of the antibiotic spectinabilin (also known as neoaureothin), a nitroaryl-substituted polyketide metabolite. This PKS system accepts the unusual starter unit 4-nitrobenzoyl-CoA and extends it by 6 molecules of (S)-methylmalonyl-CoA and a single molecule of malonyl-CoA. The first module, NorA, is used twice in an iterative fashion. The chain is Spectinabilin polyketide synthase system protein NorA from Streptomyces orinoci (Streptoverticillium orinoci).